A 418-amino-acid chain; its full sequence is Voltage-gated ClC-type chloride channel ClcB (418 aa).

The Cytoplasmic portion of the chain corresponds to 1 to 4; that stretch reads MFRR. A helical membrane pass occupies residues 5–25; it reads LLIATIVGILAAFAVAGFRHA. The Periplasmic portion of the chain corresponds to 26-53; it reads MLLLEWLFLNNDSGSLVNAATNLSPWRR. Residues 54-74 traverse the membrane as a helical segment; the sequence is LLTPALGGLAAGLLLMGWQKF. Topologically, residues 75-145 are cytoplasmic; sequence TQQRPHAPTD…QRFTPRQEWK (71 aa). The helical transmembrane segment at 146 to 166 threads the bilayer; sequence LWIACGAAAGMAAAYRAPLAG. Topologically, residues 167-177 are periplasmic; that stretch reads SLFIAEVLFGT. The chain crosses the membrane as a helical span at residues 178-200; it reads MMLASLGPVIISAVVALLISNLI. Residues 201–221 are Cytoplasmic-facing; the sequence is NHSDALLYSVQLSVTVQARDY. The helical transmembrane segment at 222–242 threads the bilayer; it reads ALIISTGVLAGLCGPLLLTLM. The Periplasmic portion of the chain corresponds to 243-257; the sequence is NACHRGFVSLKLAPP. Residues 258 to 278 form a helical membrane-spanning segment; it reads WQLALGGLIVGLLSLFTPAVW. Over 279–290 the chain is Cytoplasmic; it reads GNGYSTVQSFLT. Residues 291-311 form a helical membrane-spanning segment; the sequence is APPLLMIIAGIFLCKLCAVLA. Over 312–315 the chain is Periplasmic; it reads SSGS. The chain crosses the membrane as a helical span at residues 316–336; that stretch reads GAPGGVFTPTLFIGLAIGMLY. Residues 337-351 are Cytoplasmic-facing; that stretch reads GRSLGLWLPDGEEIT. The helical transmembrane segment at 352–372 threads the bilayer; that stretch reads LLLGLTGMATLLAATTHAPIM. The Periplasmic segment spans residues 373 to 379; sequence STLMICE. A helical membrane pass occupies residues 380-400; it reads MTGEYQLLPGLLIACVIASVI. Topologically, residues 401 to 418 are cytoplasmic; the sequence is SRTLHRDSIYRQHTAKHS.

Belongs to the chloride channel (TC 2.A.49) family. ClcB subfamily.

Its subcellular location is the cell inner membrane. In terms of biological role, probably acts as an electrical shunt for an outwardly-directed proton pump that is linked to amino acid decarboxylation, as part of the extreme acid resistance (XAR) response. The protein is Voltage-gated ClC-type chloride channel ClcB (clcB) of Escherichia coli O6:H1 (strain CFT073 / ATCC 700928 / UPEC).